Consider the following 367-residue polypeptide: UDP-N-acetylenolpyruvoylglucosamine reductase 2 (367 aa).

Residues 31–198 (IGGKPRSAVR…LAIELQLLTD (168 aa)) form the FAD-binding PCMH-type domain. R176 is a catalytic residue. S256 acts as the Proton donor in catalysis. E357 is a catalytic residue.

It belongs to the MurB family. FAD is required as a cofactor.

The protein resides in the cytoplasm. It catalyses the reaction UDP-N-acetyl-alpha-D-muramate + NADP(+) = UDP-N-acetyl-3-O-(1-carboxyvinyl)-alpha-D-glucosamine + NADPH + H(+). The protein operates within cell wall biogenesis; peptidoglycan biosynthesis. Its function is as follows. Cell wall formation. The protein is UDP-N-acetylenolpyruvoylglucosamine reductase 2 (murB2) of Corynebacterium glutamicum (strain ATCC 13032 / DSM 20300 / JCM 1318 / BCRC 11384 / CCUG 27702 / LMG 3730 / NBRC 12168 / NCIMB 10025 / NRRL B-2784 / 534).